The chain runs to 181 residues: MENRNRNSRPIKNQDPVNEFIRAHQVLVIDEDKQNLGVMSKRQALEIARSKNLDLYQVGVQPDGTVITRIVNFGKLKYEQQKKSKEAKKHQTKIENKEIRITVNIGKHDLETKARKAKEFLEEGSRVKVSLKFRGREVVYLDLGQQTLNNFFELVSDVGKMEKEAKLNGKFLDMYIVPKKN.

It belongs to the IF-3 family. Monomer.

It localises to the cytoplasm. Its function is as follows. IF-3 binds to the 30S ribosomal subunit and shifts the equilibrium between 70S ribosomes and their 50S and 30S subunits in favor of the free subunits, thus enhancing the availability of 30S subunits on which protein synthesis initiation begins. This is Translation initiation factor IF-3 from Mycoplasma mycoides subsp. mycoides SC (strain CCUG 32753 / NCTC 10114 / PG1).